Consider the following 275-residue polypeptide: NAD kinase (275 aa).

Asp68 serves as the catalytic Proton acceptor. NAD(+) is bound by residues 68 to 69, Arg73, 136 to 137, Lys147, Arg164, Asp166, 177 to 182, Ala201, and Gln236; these read DG, NE, and TAYAMS.

Belongs to the NAD kinase family. It depends on a divalent metal cation as a cofactor.

The protein resides in the cytoplasm. It catalyses the reaction NAD(+) + ATP = ADP + NADP(+) + H(+). In terms of biological role, involved in the regulation of the intracellular balance of NAD and NADP, and is a key enzyme in the biosynthesis of NADP. Catalyzes specifically the phosphorylation on 2'-hydroxyl of the adenosine moiety of NAD to yield NADP. The polypeptide is NAD kinase (Methanosarcina barkeri (strain Fusaro / DSM 804)).